The following is a 179-amino-acid chain: MFFLAAEGGETSHSPILPVWQEIVVGLVAFGLLAFVLMKFVFPRMEQTFQARVDAIEGGIKRAEAAQAEANQLLEQYRAQLSEARSDAAKIRDDARADAEGIRQDILAKAREESDRIIAAGKEQLVAERATIVRELRTEVGTLAVDLASKIVGESLADEARRAGTVDRFLDGLESAGAR.

The chain crosses the membrane as a helical span at residues 23 to 43 (IVVGLVAFGLLAFVLMKFVFP).

Belongs to the ATPase B chain family. F-type ATPases have 2 components, F(1) - the catalytic core - and F(0) - the membrane proton channel. F(1) has five subunits: alpha(3), beta(3), gamma(1), delta(1), epsilon(1). F(0) has three main subunits: a(1), b(2) and c(10-14). The alpha and beta chains form an alternating ring which encloses part of the gamma chain. F(1) is attached to F(0) by a central stalk formed by the gamma and epsilon chains, while a peripheral stalk is formed by the delta and b chains.

The protein localises to the cell membrane. Functionally, f(1)F(0) ATP synthase produces ATP from ADP in the presence of a proton or sodium gradient. F-type ATPases consist of two structural domains, F(1) containing the extramembraneous catalytic core and F(0) containing the membrane proton channel, linked together by a central stalk and a peripheral stalk. During catalysis, ATP synthesis in the catalytic domain of F(1) is coupled via a rotary mechanism of the central stalk subunits to proton translocation. Component of the F(0) channel, it forms part of the peripheral stalk, linking F(1) to F(0). In Salinispora arenicola (strain CNS-205), this protein is ATP synthase subunit b.